Reading from the N-terminus, the 167-residue chain is Crossover junction endodeoxyribonuclease RuvC (167 aa).

Residues D8, E68, and D140 contribute to the active site. Mg(2+)-binding residues include D8, E68, and D140.

It belongs to the RuvC family. In terms of assembly, homodimer which binds Holliday junction (HJ) DNA. The HJ becomes 2-fold symmetrical on binding to RuvC with unstacked arms; it has a different conformation from HJ DNA in complex with RuvA. In the full resolvosome a probable DNA-RuvA(4)-RuvB(12)-RuvC(2) complex forms which resolves the HJ. Mg(2+) serves as cofactor.

It localises to the cytoplasm. The catalysed reaction is Endonucleolytic cleavage at a junction such as a reciprocal single-stranded crossover between two homologous DNA duplexes (Holliday junction).. The RuvA-RuvB-RuvC complex processes Holliday junction (HJ) DNA during genetic recombination and DNA repair. Endonuclease that resolves HJ intermediates. Cleaves cruciform DNA by making single-stranded nicks across the HJ at symmetrical positions within the homologous arms, yielding a 5'-phosphate and a 3'-hydroxyl group; requires a central core of homology in the junction. The consensus cleavage sequence is 5'-(A/T)TT(C/G)-3'. Cleavage occurs on the 3'-side of the TT dinucleotide at the point of strand exchange. HJ branch migration catalyzed by RuvA-RuvB allows RuvC to scan DNA until it finds its consensus sequence, where it cleaves and resolves the cruciform DNA. The protein is Crossover junction endodeoxyribonuclease RuvC of Sinorhizobium medicae (strain WSM419) (Ensifer medicae).